A 132-amino-acid chain; its full sequence is MTATTSKRKKYVREMKPTWWKKLDFYKLYIAREATAIPTLWFCLVLLYGVISLGSLDSFGNFISFLKNPIVIILNIITLGAMLLNTVTYYVMTPKVLNIIVKNERINPNIITMALWAVTAFISLVILVFMYV.

The next 3 membrane-spanning stretches (helical) occupy residues 36-56 (AIPT…LGSL), 70-90 (IVII…VTYY), and 110-130 (IITM…LVFM).

This sequence belongs to the FrdC family. As to quaternary structure, part of an enzyme complex containing four subunits: a flavoprotein (FrdA), an iron-sulfur protein (FrdB), and two hydrophobic anchor proteins (FrdC and FrdD).

The protein localises to the cell inner membrane. Its function is as follows. Anchors the catalytic components of the fumarate reductase complex to the cell membrane, binds quinones. The polypeptide is Fumarate reductase subunit C (Pasteurella multocida (strain Pm70)).